A 222-amino-acid chain; its full sequence is Small ribosomal subunit protein uS5 (222 aa).

Positions 1–41 (MAEQAGAGSAQDNRGGGRDDRGGRGRRDDRGGRGGRDDREK) are disordered. Residues 15–41 (GGGRDDRGGRGRRDDRGGRGGRDDREK) show a composition bias toward basic and acidic residues. The S5 DRBM domain maps to 44 to 107 (YLERVVTINR…EEARKNFFRV (64 aa)).

The protein belongs to the universal ribosomal protein uS5 family. As to quaternary structure, part of the 30S ribosomal subunit. Contacts proteins S4 and S8.

Functionally, with S4 and S12 plays an important role in translational accuracy. Located at the back of the 30S subunit body where it stabilizes the conformation of the head with respect to the body. The protein is Small ribosomal subunit protein uS5 of Mycolicibacterium gilvum (strain PYR-GCK) (Mycobacterium gilvum (strain PYR-GCK)).